The primary structure comprises 222 residues: Thymidylate kinase (222 aa).

ATP is bound at residue 7-14 (GIDGAGKS).

It belongs to the thymidylate kinase family.

It carries out the reaction dTMP + ATP = dTDP + ADP. Phosphorylation of dTMP to form dTDP in both de novo and salvage pathways of dTTP synthesis. This Chlorobium chlorochromatii (strain CaD3) protein is Thymidylate kinase.